Reading from the N-terminus, the 210-residue chain is MINIAKEHKVNEQIRVRQIRLIGGEGEQIGIIDTRDAMNMAREKGLDLVMVSPQAVPPVCRLLDYGRFRYEQQQNEKENRKRVRSQEVKAIKFRVKIDDHDFKTKTGHVRRFLDDGHKVKVTIMFRGRERTHPELGERILVRVAEALADVGTPEGMPSMMGMDMNMIMAPKQAPAPKKERTEESAEKAGSAGETEPVPAASAAAEAPANV.

The interval 169 to 210 (APKQAPAPKKERTEESAEKAGSAGETEPVPAASAAAEAPANV) is disordered. The span at 176–186 (PKKERTEESAE) shows a compositional bias: basic and acidic residues. Over residues 187-210 (KAGSAGETEPVPAASAAAEAPANV) the composition is skewed to low complexity.

This sequence belongs to the IF-3 family. Monomer.

The protein resides in the cytoplasm. IF-3 binds to the 30S ribosomal subunit and shifts the equilibrium between 70S ribosomes and their 50S and 30S subunits in favor of the free subunits, thus enhancing the availability of 30S subunits on which protein synthesis initiation begins. The chain is Translation initiation factor IF-3 from Deinococcus deserti (strain DSM 17065 / CIP 109153 / LMG 22923 / VCD115).